Here is a 153-residue protein sequence, read N- to C-terminus: Ribonuclease H (153 aa).

The 142-residue stretch at 7–148 folds into the RNase H type-1 domain; the sequence is PADLVEMWTD…ADMLANQGVA (142 aa). Residues aspartate 16, glutamate 54, aspartate 76, and aspartate 140 each coordinate Mg(2+).

It belongs to the RNase H family. Monomer. Mg(2+) serves as cofactor.

It is found in the cytoplasm. The catalysed reaction is Endonucleolytic cleavage to 5'-phosphomonoester.. Endonuclease that specifically degrades the RNA of RNA-DNA hybrids. This is Ribonuclease H from Bordetella avium (strain 197N).